Consider the following 291-residue polypeptide: 4-hydroxy-tetrahydrodipicolinate synthase (291 aa).

T45 is a pyruvate binding site. Catalysis depends on Y133, which acts as the Proton donor/acceptor. K161 acts as the Schiff-base intermediate with substrate in catalysis. Residue I203 participates in pyruvate binding.

It belongs to the DapA family. In terms of assembly, homotetramer; dimer of dimers.

It localises to the cytoplasm. It catalyses the reaction L-aspartate 4-semialdehyde + pyruvate = (2S,4S)-4-hydroxy-2,3,4,5-tetrahydrodipicolinate + H2O + H(+). It functions in the pathway amino-acid biosynthesis; L-lysine biosynthesis via DAP pathway; (S)-tetrahydrodipicolinate from L-aspartate: step 3/4. Functionally, catalyzes the condensation of (S)-aspartate-beta-semialdehyde [(S)-ASA] and pyruvate to 4-hydroxy-tetrahydrodipicolinate (HTPA). The chain is 4-hydroxy-tetrahydrodipicolinate synthase from Neisseria meningitidis serogroup C / serotype 2a (strain ATCC 700532 / DSM 15464 / FAM18).